The following is a 142-amino-acid chain: Nucleoside diphosphate kinase (142 aa).

The ATP site is built by Lys11, Phe59, Arg87, Thr93, Arg104, and Asn114. Residue His117 is the Pros-phosphohistidine intermediate of the active site.

Belongs to the NDK family. Homotetramer. Requires Mg(2+) as cofactor.

The protein resides in the cytoplasm. The catalysed reaction is a 2'-deoxyribonucleoside 5'-diphosphate + ATP = a 2'-deoxyribonucleoside 5'-triphosphate + ADP. It carries out the reaction a ribonucleoside 5'-diphosphate + ATP = a ribonucleoside 5'-triphosphate + ADP. In terms of biological role, major role in the synthesis of nucleoside triphosphates other than ATP. The ATP gamma phosphate is transferred to the NDP beta phosphate via a ping-pong mechanism, using a phosphorylated active-site intermediate. The sequence is that of Nucleoside diphosphate kinase from Wigglesworthia glossinidia brevipalpis.